An 82-amino-acid polypeptide reads, in one-letter code: Quinohemoprotein amine dehydrogenase subunit gamma (82 aa).

A cross-link (4-cysteinyl-glutamic acid (Cys-Glu)) is located at residues 7–16 (CTTSFDPGWE). Cross-links (3-cysteinyl-aspartic acid (Cys-Asp)) lie at residues 27–33 (CQPMEAD) and 41–49 (CWWPAQVAD). Asp-33 serves as the catalytic Proton acceptor. A cross-link (4'-cysteinyl-tryptophylquinone (Cys-Trp)) is located at residues 37-43 (CADPCWW). Trp-43 carries the tryptophylquinone modification.

The protein belongs to the quinohemoprotein amine dehydrogenase subunit gamma family. As to quaternary structure, heterotrimer of an alpha, a beta and a gamma subunit. It depends on cysteine tryptophylquinone residue as a cofactor. Post-translationally, the cysteine tryptophylquinone (CTQ) is generated by oxidation of the indole ring of a tryptophan residue to form tryptophylquinone, followed by covalent cross-linking with a cysteine residue.

Its subcellular location is the periplasm. It carries out the reaction 2 Fe(III)-[cytochrome c550] + an aliphatic amine + H2O = 2 Fe(II)-[cytochrome c550] + an aldehyde + NH4(+) + 2 H(+). With respect to regulation, inhibited by carbonyl reagents such as hydrazine, hydroxylamine, phenylhydrazine and semicarbazide. In terms of biological role, catalyzes the oxidative deamination of a wide range of primary aliphatic and aromatic amines. The physiological electron acceptor is the constitutive cytochrome c550. The protein is Quinohemoprotein amine dehydrogenase subunit gamma (qhnDH) of Paracoccus denitrificans.